Reading from the N-terminus, the 446-residue chain is Probable arogenate/prephenate dehydrogenase (446 aa).

A Prephenate/arogenate dehydrogenase domain is found at 6-288 (LTISIIGGTD…SEAKRGAYYS (283 aa)).

This sequence in the N-terminal section; belongs to the prephenate/arogenate dehydrogenase family.

This Methanocaldococcus jannaschii (strain ATCC 43067 / DSM 2661 / JAL-1 / JCM 10045 / NBRC 100440) (Methanococcus jannaschii) protein is Probable arogenate/prephenate dehydrogenase.